The primary structure comprises 312 residues: Olfactory receptor 51B6 (312 aa).

Over 1–23 the chain is Extracellular; that stretch reads MGLNKSASTFQLTGFPGMEKAHH. N4 is a glycosylation site (N-linked (GlcNAc...) asparagine). Residues 24–44 form a helical membrane-spanning segment; that stretch reads WIFIPLLAAYISILLGNGTLL. Residues 45 to 52 lie on the Cytoplasmic side of the membrane; the sequence is FLIRNDHN. Residues 53 to 73 form a helical membrane-spanning segment; that stretch reads LHEPMYYFLAMLAATDLGVTL. Over 74-97 the chain is Extracellular; sequence TTMPTVLGVLWLDHREIGHGACFS. A disulfide bridge links C95 with C187. A helical membrane pass occupies residues 98 to 118; the sequence is QAYFIHTLSVMESGVLLAMAY. Residues 119 to 137 are Cytoplasmic-facing; that stretch reads DCFITIRSPLRYTSILTNT. Residues 138-158 form a helical membrane-spanning segment; it reads QVMKIGVRVLTRAGLSIMPIV. Residues 159 to 194 are Extracellular-facing; it reads VRLHWFPYCRSHVLSHAFCLHQDVIKLACADITFNR. Residues 195–215 traverse the membrane as a helical segment; that stretch reads LYPVVVLFAMVLLDFLIIFFS. The Cytoplasmic segment spans residues 216–235; it reads YILILKTVMGIGSGGERAKA. A helical transmembrane segment spans residues 236-256; the sequence is LNTCVSHICCILVFYVTVVCL. The Extracellular segment spans residues 257–271; sequence TFIHRFGKHVPHVVH. A helical transmembrane segment spans residues 272–292; the sequence is ITMSYIHFLFPPFMNPFIYSI. Residues 293–312 are Cytoplasmic-facing; sequence KTKQIQSGILRLFSLPHSRA.

This sequence belongs to the G-protein coupled receptor 1 family.

The protein resides in the cell membrane. Odorant receptor. The sequence is that of Olfactory receptor 51B6 (OR51B6) from Homo sapiens (Human).